The chain runs to 235 residues: Non-structural maintenance of chromosomes element 1 homolog (235 aa).

The RING-type; atypical zinc finger occupies 181-225 (IKNCTLCKCLVLWDIRCGSCNIQYHRGCIQTYLQRRDICPSCGNL). T185 carries the post-translational modification Phosphothreonine.

This sequence belongs to the NSE1 family. As to quaternary structure, component of the Smc5-Smc6 complex which consists at least of Smc5, Smc6, Nse1, Nse2, Nse4 and MAGE. Nse1, Nse4 and MAGE probably form a subcomplex that bridges the head domains of the Smc5-Smc6 heterodimer. Interacts with MAGE and Nse4.

The protein resides in the nucleus. The catalysed reaction is S-ubiquitinyl-[E2 ubiquitin-conjugating enzyme]-L-cysteine + [acceptor protein]-L-lysine = [E2 ubiquitin-conjugating enzyme]-L-cysteine + N(6)-ubiquitinyl-[acceptor protein]-L-lysine.. Component of the SMC5-SMC6 complex, a complex involved in repair of DNA double-strand breaks by homologous recombination. The complex may promote sister chromatid homologous recombination by recruiting the SMC1-SMC3 cohesin complex to double-strand breaks. The protein is Non-structural maintenance of chromosomes element 1 homolog of Drosophila melanogaster (Fruit fly).